We begin with the raw amino-acid sequence, 463 residues long: Argininosuccinate lyase (463 aa).

The protein belongs to the lyase 1 family. Argininosuccinate lyase subfamily.

Its subcellular location is the cytoplasm. It carries out the reaction 2-(N(omega)-L-arginino)succinate = fumarate + L-arginine. It functions in the pathway amino-acid biosynthesis; L-arginine biosynthesis; L-arginine from L-ornithine and carbamoyl phosphate: step 3/3. This Methylorubrum extorquens (strain CM4 / NCIMB 13688) (Methylobacterium extorquens) protein is Argininosuccinate lyase.